The chain runs to 160 residues: Cytochrome b6-f complex subunit 4 (160 aa).

3 helical membrane passes run 36–56 (LLYIFPVVIFGTIACNVGLAV), 95–115 (LLGVLLMAAVPAGLLTVPFLE), and 131–151 (TVFLFGTVVALWLGIGAALPI).

Belongs to the cytochrome b family. PetD subfamily. The 4 large subunits of the cytochrome b6-f complex are cytochrome b6, subunit IV (17 kDa polypeptide, petD), cytochrome f and the Rieske protein, while the 4 small subunits are petG, petL, petM and petN. The complex functions as a dimer.

Its subcellular location is the plastid. It is found in the chloroplast thylakoid membrane. Functionally, component of the cytochrome b6-f complex, which mediates electron transfer between photosystem II (PSII) and photosystem I (PSI), cyclic electron flow around PSI, and state transitions. This is Cytochrome b6-f complex subunit 4 from Spirogyra maxima (Green alga).